A 280-amino-acid polypeptide reads, in one-letter code: Formyltetrahydrofolate deformylase (280 aa).

Residues 8–86 (VLRTICPDQK…RELNPAGRRR (79 aa)) enclose the ACT domain. D225 is a catalytic residue.

It belongs to the PurU family. In terms of assembly, homohexamer.

The enzyme catalyses (6R)-10-formyltetrahydrofolate + H2O = (6S)-5,6,7,8-tetrahydrofolate + formate + H(+). Its pathway is purine metabolism; IMP biosynthesis via de novo pathway; formate from 10-formyl-5,6,7,8-tetrahydrofolate: step 1/1. Activated by methionine, inhibited by glycine. Functionally, catalyzes the hydrolysis of 10-formyltetrahydrofolate (formyl-FH4) to formate and tetrahydrofolate (FH4). Provides the major source of formate for the PurT-dependent synthesis of 5'-phosphoribosyl-N-formylglycinamide (FGAR) during aerobic growth. Has a role in regulating the one-carbon pool. The protein is Formyltetrahydrofolate deformylase of Escherichia coli (strain K12).